Reading from the N-terminus, the 297-residue chain is UTP--glucose-1-phosphate uridylyltransferase (297 aa).

The protein belongs to the UDPGP type 2 family.

It catalyses the reaction alpha-D-glucose 1-phosphate + UTP + H(+) = UDP-alpha-D-glucose + diphosphate. The protein operates within carbohydrate metabolism; nucleotide-sugar metabolism. Its pathway is bacterial outer membrane biogenesis; lipopolysaccharide biosynthesis. This chain is UTP--glucose-1-phosphate uridylyltransferase (galF), found in Escherichia coli O157:H7.